A 308-amino-acid polypeptide reads, in one-letter code: Low density lipoprotein receptor adapter protein 1 (308 aa).

Met1 carries the N-acetylmethionine modification. Ser14, Ser186, and Ser202 each carry phosphoserine. The 155-residue stretch at 42 to 196 (LLEGMLFSLK…QEGGDVLGAR (155 aa)) folds into the PID domain. Positions 212-216 (LLDLE) match the Clathrin box motif. Residues 249–276 (WELDDGLDEAFSRLAQSRTNPQVLDTGL) form an AP-2 complex binding region. Residues 257-266 (EAFSRLAQSR) carry the [DE]-X(1,2)-F-X-X-[FL]-X-X-X-R motif motif.

In terms of assembly, interacts (via PID domain) with LDLR (via NPXY motif). Binds to soluble clathrin trimers. Interacts with AP2B1; the interaction mediates the association with the AP-2 complex. Interacts with VLDLR. Interacts with LRP2. As to expression, expressed at high levels in the kidney, liver, and placenta, with lower levels detectable in brain, heart, muscle, colon, spleen, intestine, lung, and leukocytes.

It localises to the cytoplasm. Adapter protein (clathrin-associated sorting protein (CLASP)) required for efficient endocytosis of the LDL receptor (LDLR) in polarized cells such as hepatocytes and lymphocytes, but not in non-polarized cells (fibroblasts). May be required for LDL binding and internalization but not for receptor clustering in coated pits. May facilitate the endocytosis of LDLR and LDLR-LDL complexes from coated pits by stabilizing the interaction between the receptor and the structural components of the pits. May also be involved in the internalization of other LDLR family members. Binds to phosphoinositides, which regulate clathrin bud assembly at the cell surface. Required for trafficking of LRP2 to the endocytic recycling compartment which is necessary for LRP2 proteolysis, releasing a tail fragment which translocates to the nucleus and mediates transcriptional repression. In Homo sapiens (Human), this protein is Low density lipoprotein receptor adapter protein 1.